The sequence spans 175 residues: Small ribosomal subunit protein uS5 (175 aa).

Residues Met-1–Arg-21 are disordered. The S5 DRBM domain maps to Met-20–Val-83.

This sequence belongs to the universal ribosomal protein uS5 family. As to quaternary structure, part of the 30S ribosomal subunit. Contacts proteins S4 and S8.

In terms of biological role, with S4 and S12 plays an important role in translational accuracy. Functionally, located at the back of the 30S subunit body where it stabilizes the conformation of the head with respect to the body. The protein is Small ribosomal subunit protein uS5 of Dechloromonas aromatica (strain RCB).